Here is a 290-residue protein sequence, read N- to C-terminus: Nucleotide-binding protein BPP4038 (290 aa).

9–16 is a binding site for ATP; sequence GISGSGKS. Position 58–61 (58–61) interacts with GTP; sequence DVRS.

This sequence belongs to the RapZ-like family.

Its function is as follows. Displays ATPase and GTPase activities. This chain is Nucleotide-binding protein BPP4038, found in Bordetella parapertussis (strain 12822 / ATCC BAA-587 / NCTC 13253).